The primary structure comprises 286 residues: 4-hydroxybenzoate octaprenyltransferase (286 aa).

7 consecutive transmembrane segments (helical) span residues 20-40 (IGTL…AGGM), 43-63 (LKVL…GCII), 96-116 (LFVV…PLVV), 142-162 (FLGV…TGTV), 167-187 (WWLF…YAMV), 210-230 (QVIA…GWAA), and 234-254 (LVYA…QKLI).

This sequence belongs to the UbiA prenyltransferase family. The cofactor is Mg(2+).

The protein resides in the cell inner membrane. It carries out the reaction all-trans-octaprenyl diphosphate + 4-hydroxybenzoate = 4-hydroxy-3-(all-trans-octaprenyl)benzoate + diphosphate. It participates in cofactor biosynthesis; ubiquinone biosynthesis. Functionally, catalyzes the prenylation of para-hydroxybenzoate (PHB) with an all-trans polyprenyl group. Mediates the second step in the final reaction sequence of ubiquinone-8 (UQ-8) biosynthesis, which is the condensation of the polyisoprenoid side chain with PHB, generating the first membrane-bound Q intermediate 3-octaprenyl-4-hydroxybenzoate. The sequence is that of 4-hydroxybenzoate octaprenyltransferase from Shewanella woodyi (strain ATCC 51908 / MS32).